The following is a 287-amino-acid chain: Nucleotide-binding protein Pmob_0154 (287 aa).

15–22 (GLSGAGKT) contributes to the ATP binding site. 64-67 (DIRW) is a binding site for GTP.

Belongs to the RapZ-like family.

Its function is as follows. Displays ATPase and GTPase activities. The chain is Nucleotide-binding protein Pmob_0154 from Petrotoga mobilis (strain DSM 10674 / SJ95).